The chain runs to 962 residues: Probable transport protein MmpL9 (962 aa).

The next 12 membrane-spanning stretches (helical) occupy residues 25 to 45 (LAAIPILLCWLGFTVFVSVAV), 201 to 223 (LITGLTFAVITVLLLLVYRSIAT), 225 to 247 (LLILPMVFIGLGATRGTIAFLGY), 256 to 276 (FVVNILTALAIAAGTDYAIFL), 302 to 322 (ANVILGSGLTIAGATYCLSFA), 335 to 355 (AIGMLVSVAAALTLAPAIIAI), 383 to 403 (WPGPILATSVALALVGLLALP), 768 to 788 (YDILIVGIAAVCLVFIVMLMI), 796 to 816 (LVIVGTVLLSLGTAFGLSVLI), 820 to 840 (FVGLQVHWTIVAMSVIVLLAV), 867 to 887 (AMAGTGAVVTSAGLVFAFTMA), and 895 to 915 (RVIGQVGTTIGLGLLFDTLVV).

This sequence belongs to the resistance-nodulation-cell division (RND) (TC 2.A.6) family. MmpL subfamily.

It localises to the cell membrane. The sequence is that of Probable transport protein MmpL9 (mmpL9) from Mycobacterium tuberculosis (strain ATCC 25618 / H37Rv).